We begin with the raw amino-acid sequence, 217 residues long: Thiamine-phosphate synthase (217 aa).

4-amino-2-methyl-5-(diphosphooxymethyl)pyrimidine-binding positions include Gln38–Lys42 and Asn70. Mg(2+) contacts are provided by Asp71 and Asp90. Residue Ser109 coordinates 4-amino-2-methyl-5-(diphosphooxymethyl)pyrimidine. A 2-[(2R,5Z)-2-carboxy-4-methylthiazol-5(2H)-ylidene]ethyl phosphate-binding site is contributed by Ser136 to Thr138. Residue Lys139 coordinates 4-amino-2-methyl-5-(diphosphooxymethyl)pyrimidine. Gly166 is a 2-[(2R,5Z)-2-carboxy-4-methylthiazol-5(2H)-ylidene]ethyl phosphate binding site.

Belongs to the thiamine-phosphate synthase family. Requires Mg(2+) as cofactor.

The catalysed reaction is 2-[(2R,5Z)-2-carboxy-4-methylthiazol-5(2H)-ylidene]ethyl phosphate + 4-amino-2-methyl-5-(diphosphooxymethyl)pyrimidine + 2 H(+) = thiamine phosphate + CO2 + diphosphate. It carries out the reaction 2-(2-carboxy-4-methylthiazol-5-yl)ethyl phosphate + 4-amino-2-methyl-5-(diphosphooxymethyl)pyrimidine + 2 H(+) = thiamine phosphate + CO2 + diphosphate. It catalyses the reaction 4-methyl-5-(2-phosphooxyethyl)-thiazole + 4-amino-2-methyl-5-(diphosphooxymethyl)pyrimidine + H(+) = thiamine phosphate + diphosphate. It functions in the pathway cofactor biosynthesis; thiamine diphosphate biosynthesis; thiamine phosphate from 4-amino-2-methyl-5-diphosphomethylpyrimidine and 4-methyl-5-(2-phosphoethyl)-thiazole: step 1/1. In terms of biological role, condenses 4-methyl-5-(beta-hydroxyethyl)thiazole monophosphate (THZ-P) and 2-methyl-4-amino-5-hydroxymethyl pyrimidine pyrophosphate (HMP-PP) to form thiamine monophosphate (TMP). This is Thiamine-phosphate synthase from Nitrosococcus oceani (strain ATCC 19707 / BCRC 17464 / JCM 30415 / NCIMB 11848 / C-107).